Here is a 508-residue protein sequence, read N- to C-terminus: Carboxypeptidase Y homolog ARB_05721 (508 aa).

The signal sequence occupies residues 1 to 25 (MELYLNMLSFWYILLATSFFGPSQA). Residues Asn-132 and Asn-169 are each glycosylated (N-linked (GlcNAc...) asparagine). Residue Ser-204 is part of the active site. Asn-268 is a glycosylation site (N-linked (GlcNAc...) asparagine). 3 disulfide bridges follow: Cys-282–Cys-305, Cys-289–Cys-298, and Cys-332–Cys-338. Residue Asp-410 is part of the active site. Cys-413 contributes to the substrate binding site. N-linked (GlcNAc...) asparagine glycosylation occurs at Asn-451. His-484 is a catalytic residue. Residue Met-485 coordinates substrate.

It belongs to the peptidase S10 family.

The protein localises to the secreted. It carries out the reaction Release of a C-terminal amino acid with broad specificity.. Its function is as follows. Involved in degradation of small peptides. The protein is Carboxypeptidase Y homolog ARB_05721 of Arthroderma benhamiae (strain ATCC MYA-4681 / CBS 112371) (Trichophyton mentagrophytes).